A 299-amino-acid chain; its full sequence is HTH-type transcriptional regulator CrgA (299 aa).

The 60-residue stretch at 1–60 (MKTNSEELTVFVQVVESGSFSRAAEQLAMANSAVSRIVKRLEEKLGVNLLNRTTRQLSLT) folds into the HTH lysR-type domain. The H-T-H motif DNA-binding region spans 20 to 39 (FSRAAEQLAMANSAVSRIVK).

It belongs to the LysR transcriptional regulatory family. Forms oligomers. Forms an octomeric ring-like structure in solution. May form hexadecamers when bound to target DNA.

Its activity is regulated as follows. Activation and repression activities are enhanced by the addition of alpha-methylene-gamma-butyrolactone (MBL), an inducer of NADPH:quinone oxidoreductase. Its function is as follows. Regulatory protein that activates transcription of mdaB, encoding a NADPH:quinone oxidoreductase, and represses its own transcription. Under the same experimental conditions, no regulation of transcription of pilus and capsule genes is detected. This is HTH-type transcriptional regulator CrgA from Neisseria meningitidis serogroup B (strain ATCC BAA-335 / MC58).